Here is a 320-residue protein sequence, read N- to C-terminus: Olfactory receptor 52W1 (320 aa).

At 1 to 30 (MAETLQLNSTFLHPNFFILTGFPGLGSAQT) the chain is on the extracellular side. N-linked (GlcNAc...) asparagine glycosylation occurs at asparagine 8. A helical membrane pass occupies residues 31–51 (WLTLVFGPIYLLALLGNGALP). Topologically, residues 52–59 (AVVWIDST) are cytoplasmic. A helical membrane pass occupies residues 60–80 (LHQPMFLLLAILAATDLGLAT). The Extracellular portion of the chain corresponds to 81–104 (SIAPGLLAVLWLGPRSVPYAVCLV). The helical transmembrane segment at 105 to 125 (QMFFVHALTAMESGVLLAMAC) threads the bilayer. The Cytoplasmic portion of the chain corresponds to 126–144 (DRAAAIGRPLHYPVLVTKA). The helical transmembrane segment at 145–165 (CVGYAALALALKAVAIVVPFP) threads the bilayer. Over 166–201 (LLVAKFEHFQAKTIGHTYCAHMAVVELVVGNTQATN) the chain is Extracellular. The helical transmembrane segment at 202–222 (LYGLALSLAISGMDILGITGS) threads the bilayer. Residues 223–242 (YGLIAHAVLQLPTREAHAKA) lie on the Cytoplasmic side of the membrane. The helical transmembrane segment at 243 to 263 (FGTCSSHICVILAFYIPGLFS) threads the bilayer. The Extracellular portion of the chain corresponds to 264–279 (YLTHRFGHHTVPKPVH). A helical transmembrane segment spans residues 280-300 (ILLSNIYLLLPPALNPLIYGA). At 301 to 320 (RTKQIRDRLLETFTFRKSPL) the chain is on the cytoplasmic side.

Belongs to the G-protein coupled receptor 1 family.

It localises to the cell membrane. In terms of biological role, odorant receptor. The protein is Olfactory receptor 52W1 (OR52W1) of Homo sapiens (Human).